A 218-amino-acid chain; its full sequence is Large ribosomal subunit protein uL1 (218 aa).

Belongs to the universal ribosomal protein uL1 family. In terms of assembly, part of the 50S ribosomal subunit.

Its function is as follows. Binds directly to 23S rRNA. Probably involved in E site tRNA release. Functionally, protein L1 is also a translational repressor protein, it controls the translation of its operon by binding to its mRNA. The protein is Large ribosomal subunit protein uL1 of Metallosphaera sedula (strain ATCC 51363 / DSM 5348 / JCM 9185 / NBRC 15509 / TH2).